The sequence spans 39 residues: Photosystem II reaction center protein L (39 aa).

The helical transmembrane segment at 18 to 38 (SLYLGLLFVFVTGVLMSSYFF) threads the bilayer.

This sequence belongs to the PsbL family. PSII is composed of 1 copy each of membrane proteins PsbA, PsbB, PsbC, PsbD, PsbE, PsbF, PsbH, PsbI, PsbJ, PsbK, PsbL, PsbM, PsbT, PsbX, PsbY, PsbZ, Psb30/Ycf12, peripheral proteins PsbO, CyanoQ (PsbQ), PsbU, PsbV and a large number of cofactors. It forms dimeric complexes.

It is found in the cellular thylakoid membrane. Functionally, one of the components of the core complex of photosystem II (PSII). PSII is a light-driven water:plastoquinone oxidoreductase that uses light energy to abstract electrons from H(2)O, generating O(2) and a proton gradient subsequently used for ATP formation. It consists of a core antenna complex that captures photons, and an electron transfer chain that converts photonic excitation into a charge separation. This subunit is found at the monomer-monomer interface and is required for correct PSII assembly and/or dimerization. The protein is Photosystem II reaction center protein L of Synechococcus sp. (strain CC9605).